A 660-amino-acid chain; its full sequence is ATPase WRNIP1 (660 aa).

The UBZ4-type zinc finger occupies 17 to 44; the sequence is QVQCPVCQQMMPAAHINSHLDRCLLLHP. Residues Cys20, Cys23, His31, His35, and Cys39 each contribute to the Zn(2+) site. Residues 48-191 form a disordered region; that stretch reads AEPAAGSHRA…DDPGHWDADA (144 aa). Ser65 and Ser75 each carry phosphoserine. Residues 76–89 are compositionally biased toward polar residues; the sequence is ESSALKQPATPTAA. Lys81 participates in a covalent cross-link: Glycyl lysine isopeptide (Lys-Gly) (interchain with G-Cter in ubiquitin). Thr85 bears the Phosphothreonine mark. Phosphoserine is present on residues Ser91 and Ser92. Residues 92–104 show a composition bias toward acidic residues; the sequence is SEGEGEEGDDGGE. The residue at position 116 (Thr116) is a Phosphothreonine. The span at 135–155 shows a compositional bias: low complexity; it reads ARKGMGKRPAAAAAAGSASPR. A Glycyl lysine isopeptide (Lys-Gly) (interchain with G-Cter in ubiquitin) cross-link involves residue Lys141. Residue Ser153 is modified to Phosphoserine. Positions 159 to 182 are enriched in acidic residues; it reads EAEAQEEEEAGVDGDGDADVDGED. A Glycyl lysine isopeptide (Lys-Gly) (interchain with G-Cter in ubiquitin) cross-link involves residue Lys220. ATP is bound at residue 265 to 271; it reads PGCGKTT. Glycyl lysine isopeptide (Lys-Gly) (interchain with G-Cter in ubiquitin) cross-links involve residues Lys296, Lys305, Lys311, Lys317, and Lys330. Lys477 is covalently cross-linked (Glycyl lysine isopeptide (Lys-Gly) (interchain with G-Cter in SUMO2); alternate). Residue Lys477 forms a Glycyl lysine isopeptide (Lys-Gly) (interchain with G-Cter in ubiquitin); alternate linkage. Phosphotyrosine is present on residues Tyr529 and Tyr557. Lys622 participates in a covalent cross-link: Glycyl lysine isopeptide (Lys-Gly) (interchain with G-Cter in ubiquitin). Lys628 participates in a covalent cross-link: Glycyl lysine isopeptide (Lys-Gly) (interchain with G-Cter in ubiquitin); alternate. The residue at position 628 (Lys628) is an N6-acetyllysine; alternate. Residue Lys631 forms a Glycyl lysine isopeptide (Lys-Gly) (interchain with G-Cter in ubiquitin) linkage.

The protein belongs to the AAA ATPase family. RarA/MGS1/WRNIP1 subfamily. Forms homooligomers, possibly octamers. Directly interacts with POLD1, POLD2 and POLD4. Interacts with the N-terminal domain of WRN. Interacts (via UBZ4-type zinc finger) with monoubiquitin and polyubiquitin. Interacts with TRIM14 and PPP6C; these interactions positively regulate the RIGI signaling pathway. Post-translationally, sumoylated with SUMO1 and SUMO2/3. Ubiquitously expressed.

The protein localises to the nucleus. The protein resides in the cytoplasm. It carries out the reaction ATP + H2O = ADP + phosphate + H(+). Functions as a modulator of initiation or reinitiation events during DNA polymerase delta-mediated DNA synthesis. In the presence of ATP, stimulation of DNA polymerase delta-mediated DNA synthesis is decreased. Also plays a role in the innate immune defense against viruses. Stabilizes the RIGI dsRNA interaction and promotes RIGI 'Lys-63'-linked polyubiquitination. In turn, RIGI transmits the signal through mitochondrial MAVS. The protein is ATPase WRNIP1 of Mus musculus (Mouse).